Consider the following 128-residue polypeptide: Large ribosomal subunit protein eL22 (128 aa).

Phosphothreonine is present on Thr62. The residue at position 66 (Ser66) is a Phosphoserine. Lys69 carries the N6-succinyllysine modification.

It belongs to the eukaryotic ribosomal protein eL22 family. Component of the large ribosomal subunit.

The protein resides in the cytoplasm. Functionally, component of the large ribosomal subunit. The ribosome is a large ribonucleoprotein complex responsible for the synthesis of proteins in the cell. In Sus scrofa (Pig), this protein is Large ribosomal subunit protein eL22 (RPL22).